The following is a 555-amino-acid chain: MGNTVHRTLPDPSPPARLLATRPCCGPGPERRPVLGEAPRFHAQAKGKNVRLDGHSRRATRRNSFCNGVTFTQRPIRLYEQVRLRLVAVRPGWSGALRFGFTAHDPSLMSAQDIPKYACPDLVTRPGYWAKALPENLALRDTVLAYWADRHGRVFYSVNDGEPVLFHCGVAVGGPLWALIDVYGITDEVQLLESAFADTLTPARLSQARFSACLPPSSHDAANFDNNELENNQVVAKLGHLALGRAPGPPPADAAAAAIPCGPRERPRPASSPALLEADLRFHATRGPDVSLSADRKVACAPRPDGGRTLVFSERPLRPGESLFVEVGRPGLAAPGALAFGITSCDPGVLRPNELPADPDALLDRKEYWVVARAGPVPSGGDALSFTLRPGGDVLLGINGRPRGRLLCVDTTQALWAFFAVRGGVAGQLRLLGTLQSSPATTTPSGSLSGSQDDSDSDMTFSVNQSSSASESSLVTAPSSPLSPPVSPVFSPPEPAGIKNGECTVCFDGEVDTVIYTCGHMCLCHSCGLRLKRQARACCPICRRPIKDVIKIYRP.

The 157-residue stretch at 38–194 (APRFHAQAKG…ITDEVQLLES (157 aa)) folds into the NHR 1 domain. T199 is modified (phosphothreonine). In terms of domain architecture, NHR 2 spans 279–433 (DLRFHATRGP…GVAGQLRLLG (155 aa)). A disordered region spans residues 436–493 (QSSPATTTPSGSLSGSQDDSDSDMTFSVNQSSSASESSLVTAPSSPLSPPVSPVFSPP). Low complexity predominate over residues 462-480 (SVNQSSSASESSLVTAPSS). The span at 481–493 (PLSPPVSPVFSPP) shows a compositional bias: pro residues. Residues 503–543 (CTVCFDGEVDTVIYTCGHMCLCHSCGLRLKRQARACCPICR) form an RING-type zinc finger.

Interacts with JAG1, DLL1 and DLL4. As to expression, highest expression in brain, prostate and small intestine. In the brain the levels are higher in fetal than in adult stage. In the adult brain the highest levels are detected in the olfactory system, cerebellar cortex, optic nerve and the frontal lobe.

The protein resides in the cytoplasm. It catalyses the reaction S-ubiquitinyl-[E2 ubiquitin-conjugating enzyme]-L-cysteine + [acceptor protein]-L-lysine = [E2 ubiquitin-conjugating enzyme]-L-cysteine + N(6)-ubiquitinyl-[acceptor protein]-L-lysine.. It functions in the pathway protein modification; protein ubiquitination. E3 ubiquitin-protein ligase involved in regulation of the Notch pathway through influencing the stability and activity of several Notch ligands. This Homo sapiens (Human) protein is E3 ubiquitin-protein ligase NEURL1B (NEURL1B).